Reading from the N-terminus, the 785-residue chain is Mitochondrial intermediate peptidase (785 aa).

A mitochondrion-targeting transit peptide spans 1–26 (MLKVTTSRPWVCSRCVRRQVQSRRRL). The interval 26 to 51 (LATASTQYRESRPVPVDNSAPGAKRD) is disordered. Residue histidine 566 coordinates Zn(2+). Glutamate 567 is an active-site residue. 2 residues coordinate Zn(2+): histidine 570 and histidine 573.

The protein belongs to the peptidase M3 family. Zn(2+) serves as cofactor.

The protein resides in the mitochondrion matrix. The catalysed reaction is Release of an N-terminal octapeptide as second stage of processing of some proteins imported into the mitochondrion.. In terms of biological role, cleaves proteins, imported into the mitochondrion, to their mature size. While most mitochondrial precursor proteins are processed to the mature form in one step by mitochondrial processing peptidase (MPP), the sequential cleavage by MIP of an octapeptide after initial processing by MPP is a required step for a subgroup of nuclear-encoded precursor proteins destined for the matrix or the inner membrane. This chain is Mitochondrial intermediate peptidase (oct1), found in Botryotinia fuckeliana (strain B05.10) (Noble rot fungus).